Here is a 464-residue protein sequence, read N- to C-terminus: Agamous-like MADS-box protein AGL92 (464 aa).

The MADS-box domain occupies 1 to 60; it reads MRTKTKLVLIPDRHFRRATFRKRNAGIRKKLHELTTLCDIKACAVIYSPFENPTVWPSTE. A coiled-coil region spans residues 85–114; it reads ETFLRDQITKEQNKLESLRRENRETQLKHF. The tract at residues 443–464 is disordered; the sequence is TSTGHMPSTTTTTTNNNNNNNV. Positions 451–464 are enriched in low complexity; that stretch reads TTTTTTNNNNNNNV.

In terms of assembly, interacts with AGL62.

It is found in the nucleus. Its function is as follows. Putative transcription factor. The protein is Agamous-like MADS-box protein AGL92 (AGL92) of Arabidopsis thaliana (Mouse-ear cress).